Consider the following 811-residue polypeptide: Metal transporter cnnm-1 (811 aa).

An N-terminal signal peptide occupies residues 1 to 24 (MSASCLRLLTLSLFILGQCNVTAA). Residues Asn20, Asn49, Asn61, and Asn122 are each glycosylated (N-linked (GlcNAc...) asparagine). The Extracellular segment spans residues 25 to 204 (QNGVDDEVTT…KEYFLPLPLQ (180 aa)). In terms of domain architecture, CNNM transmembrane spans 197–376 (YFLPLPLQIA…TDNGQVSNEL (180 aa)). Residues 205–225 (IACIGFLLCLSALFSGLTLGL) form a helical membrane-spanning segment. The Cytoplasmic segment spans residues 226–259 (MSLTPQELELVIKSGAIKEQKCAAKILPVRKKGN). Residues 260 to 280 (LLLCSLLLGNVIVNSAISILM) form a helical membrane-spanning segment. Residues 281–284 (GELT) lie on the Extracellular side of the membrane. Residues 285 to 305 (TGIYALIGSTMGIVIFGEILP) traverse the membrane as a helical segment. Residues 306-315 (QSICVKKGLE) are Cytoplasmic-facing. The chain crosses the membrane as a helical span at residues 316 to 336 (VGAHTISITQLFIFLTFPIAW). Over 337–811 (PVSKLLDCLL…EEEMALLDQP (475 aa)) the chain is Extracellular. 2 consecutive CBS domains span residues 394-456 (MTKI…NFTV) and 462-530 (YHKH…INDE). Residues Asn435 and Asn453 are each glycosylated (N-linked (GlcNAc...) asparagine). The interval 741–760 (DVSHNSSAHNSNLSLVEKPG) is disordered. Low complexity predominate over residues 743–755 (SHNSSAHNSNLSL). Residues Asn745 and Asn752 are each glycosylated (N-linked (GlcNAc...) asparagine).

It belongs to the ACDP family. Highly expressed in the intestine and in neurons, but it is also expressed in a variety of tissues including the pharynx, hypodermis, rectum and in muscles.

It localises to the basolateral cell membrane. Its function is as follows. Probable metal transporter. Probably acts redundantly with the other metal transport proteins cnnm-2, cnnm-3, cnnm-4 and cnnm-5 to regulate Mg(2+) homeostasis. Promotes postembryonic gonad development by regulating Mg(2+) levels, probably via AMPK signaling. This chain is Metal transporter cnnm-1, found in Caenorhabditis elegans.